A 383-amino-acid chain; its full sequence is Histidine decarboxylase (383 aa).

Substrate is bound at residue His120. Lys233 bears the N6-(pyridoxal phosphate)lysine mark.

This sequence belongs to the group II decarboxylase family. In terms of assembly, homotetramer. The cofactor is pyridoxal 5'-phosphate.

The catalysed reaction is L-histidine + H(+) = histamine + CO2. The chain is Histidine decarboxylase from Acinetobacter baumannii (strain ACICU).